The following is a 602-amino-acid chain: Elongation factor 4 (602 aa).

The tr-type G domain maps to 7–189 (DKIRNFSIVA…AIVTRLPPPK (183 aa)). GTP-binding positions include 19 to 24 (DHGKST) and 136 to 139 (NKVD).

This sequence belongs to the TRAFAC class translation factor GTPase superfamily. Classic translation factor GTPase family. LepA subfamily.

The protein resides in the cell inner membrane. The enzyme catalyses GTP + H2O = GDP + phosphate + H(+). Functionally, required for accurate and efficient protein synthesis under certain stress conditions. May act as a fidelity factor of the translation reaction, by catalyzing a one-codon backward translocation of tRNAs on improperly translocated ribosomes. Back-translocation proceeds from a post-translocation (POST) complex to a pre-translocation (PRE) complex, thus giving elongation factor G a second chance to translocate the tRNAs correctly. Binds to ribosomes in a GTP-dependent manner. The polypeptide is Elongation factor 4 (Caulobacter vibrioides (strain NA1000 / CB15N) (Caulobacter crescentus)).